The sequence spans 67 residues: MPKMKTKSSAKKRFKVTATGKVRAAAAGKRHGMIKRTNKFIRDARGTMVLAEPDGKKVVKNYLPNGL.

It belongs to the bacterial ribosomal protein bL35 family.

The polypeptide is Large ribosomal subunit protein bL35 (Sinorhizobium fredii (strain NBRC 101917 / NGR234)).